The sequence spans 328 residues: Peroxidase 59 (328 aa).

A signal peptide spans 1–28; it reads MKTQTKVMGGHVLLTVFTLCMLCSGVRA. Glutamine 29 carries the post-translational modification Pyrrolidone carboxylic acid. Cystine bridges form between cysteine 39-cysteine 116, cysteine 72-cysteine 77, cysteine 122-cysteine 323, and cysteine 200-cysteine 232. Histidine 70 functions as the Proton acceptor in the catalytic mechanism. Ca(2+) contacts are provided by aspartate 71, valine 74, glycine 76, aspartate 78, and serine 80. Proline 163 is a binding site for substrate. N-linked (GlcNAc...) asparagine glycosylation is present at asparagine 182. Histidine 193 is a binding site for heme b. Ca(2+) is bound at residue threonine 194. N-linked (GlcNAc...) asparagine glycosylation is found at asparagine 209 and asparagine 239. 4 residues coordinate Ca(2+): aspartate 245, threonine 248, threonine 251, and aspartate 253. Residues asparagine 281 and asparagine 310 are each glycosylated (N-linked (GlcNAc...) asparagine).

This sequence belongs to the peroxidase family. Classical plant (class III) peroxidase subfamily. Heme b serves as cofactor. It depends on Ca(2+) as a cofactor. In terms of tissue distribution, slightly expressed in roots.

It localises to the secreted. The catalysed reaction is 2 a phenolic donor + H2O2 = 2 a phenolic radical donor + 2 H2O. In terms of biological role, removal of H(2)O(2), oxidation of toxic reductants, biosynthesis and degradation of lignin, suberization, auxin catabolism, response to environmental stresses such as wounding, pathogen attack and oxidative stress. These functions might be dependent on each isozyme/isoform in each plant tissue. The chain is Peroxidase 59 (PER59) from Arabidopsis thaliana (Mouse-ear cress).